Reading from the N-terminus, the 368-residue chain is Glycine betaine monooxygenase reductase subunit (368 aa).

In terms of domain architecture, FAD-binding FR-type spans 16–119 (NGRHNVRCVK…HGPVGDFNVI (104 aa)). The 2Fe-2S ferredoxin-type domain maps to 284–368 (LQVEFSNSGK…TPKSHVAIEF (85 aa)). Residues Cys-318, Cys-323, Cys-326, and Cys-356 each coordinate [2Fe-2S] cluster.

The protein in the N-terminal section; belongs to the FAD-binding oxidoreductase type 6 family. In terms of assembly, monomer. The system is composed of an oxygenase subunit (BmoA) and a reductase subunit (BmoB). Maximal specific activity is obtained when the ratio of BmoA to BmoB is 5:1. The cofactor is FAD. [2Fe-2S] cluster serves as cofactor.

The enzyme catalyses glycine betaine + NADH + O2 + H(+) = N,N-dimethylglycine + formaldehyde + NAD(+) + H2O. Its function is as follows. Involved in degradation of glycine betaine. Part of a Rieske-type oxygenase system that catalyzes the conversion of glycine betaine (GB) to dimethylglycine (DMG). This subunit is the ferredoxin reductase component of the system. NADH is the preferred electron donor. The chain is Glycine betaine monooxygenase reductase subunit from Chromohalobacter salexigens (strain ATCC BAA-138 / DSM 3043 / CIP 106854 / NCIMB 13768 / 1H11).